The sequence spans 179 residues: Large ribosomal subunit protein bL17 (179 aa).

Positions 123-161 (KEKDTKKKDDSKKSDDKKTSKKEAGFKSSKGESEHKKNT) are enriched in basic and acidic residues. A disordered region spans residues 123–179 (KEKDTKKKDDSKKSDDKKTSKKEAGFKSSKGESEHKKNTDQVVDSSSNRRYNRVKGS). Positions 162–171 (DQVVDSSSNR) are enriched in polar residues.

The protein belongs to the bacterial ribosomal protein bL17 family. In terms of assembly, part of the 50S ribosomal subunit. Contacts protein L32.

This is Large ribosomal subunit protein bL17 from Treponema denticola (strain ATCC 35405 / DSM 14222 / CIP 103919 / JCM 8153 / KCTC 15104).